Reading from the N-terminus, the 156-residue chain is uncharacterized protein (156 aa).

This is an uncharacterized protein from Acheta domesticus (House cricket).